Here is a 189-residue protein sequence, read N- to C-terminus: Dual specificity phosphatase 29 (189 aa).

Residues His-33–Glu-182 enclose the Tyrosine-protein phosphatase domain. His-126 to Arg-133 serves as a coordination point for substrate. Cys-127 (phosphocysteine intermediate) is an active-site residue.

This sequence belongs to the protein-tyrosine phosphatase family. Non-receptor class dual specificity subfamily.

It localises to the cytoplasm. It is found in the nucleus. The catalysed reaction is O-phospho-L-tyrosyl-[protein] + H2O = L-tyrosyl-[protein] + phosphate. It catalyses the reaction O-phospho-L-seryl-[protein] + H2O = L-seryl-[protein] + phosphate. The enzyme catalyses O-phospho-L-threonyl-[protein] + H2O = L-threonyl-[protein] + phosphate. Its function is as follows. Dual specificity phosphatase able to dephosphorylate phosphotyrosine, phosphoserine and phosphothreonine residues within the same substrate, with a preference for phosphotyrosine as a substrate. Involved in the modulation of AMPK and MAPK1/2 signaling pathways. The chain is Dual specificity phosphatase 29 (dusp29) from Danio rerio (Zebrafish).